Consider the following 404-residue polypeptide: Probable tRNA sulfurtransferase (404 aa).

The 106-residue stretch at 60–165 (QPIVEALKLV…DEAAYISYEE (106 aa)) folds into the THUMP domain. ATP-binding positions include 183–184 (ML), 208–209 (HF), Arg265, Gly287, and Gln296.

Belongs to the ThiI family.

It localises to the cytoplasm. It carries out the reaction [ThiI sulfur-carrier protein]-S-sulfanyl-L-cysteine + a uridine in tRNA + 2 reduced [2Fe-2S]-[ferredoxin] + ATP + H(+) = [ThiI sulfur-carrier protein]-L-cysteine + a 4-thiouridine in tRNA + 2 oxidized [2Fe-2S]-[ferredoxin] + AMP + diphosphate. The catalysed reaction is [ThiS sulfur-carrier protein]-C-terminal Gly-Gly-AMP + S-sulfanyl-L-cysteinyl-[cysteine desulfurase] + AH2 = [ThiS sulfur-carrier protein]-C-terminal-Gly-aminoethanethioate + L-cysteinyl-[cysteine desulfurase] + A + AMP + 2 H(+). Its pathway is cofactor biosynthesis; thiamine diphosphate biosynthesis. Catalyzes the ATP-dependent transfer of a sulfur to tRNA to produce 4-thiouridine in position 8 of tRNAs, which functions as a near-UV photosensor. Also catalyzes the transfer of sulfur to the sulfur carrier protein ThiS, forming ThiS-thiocarboxylate. This is a step in the synthesis of thiazole, in the thiamine biosynthesis pathway. The sulfur is donated as persulfide by IscS. In Streptococcus pyogenes serotype M1, this protein is Probable tRNA sulfurtransferase.